A 610-amino-acid polypeptide reads, in one-letter code: Elongation factor 4 (610 aa).

A tr-type G domain is found at serine 13–lysine 195. GTP is bound by residues aspartate 25–threonine 30 and asparagine 142–aspartate 145.

This sequence belongs to the TRAFAC class translation factor GTPase superfamily. Classic translation factor GTPase family. LepA subfamily.

It is found in the cell inner membrane. It catalyses the reaction GTP + H2O = GDP + phosphate + H(+). Required for accurate and efficient protein synthesis under certain stress conditions. May act as a fidelity factor of the translation reaction, by catalyzing a one-codon backward translocation of tRNAs on improperly translocated ribosomes. Back-translocation proceeds from a post-translocation (POST) complex to a pre-translocation (PRE) complex, thus giving elongation factor G a second chance to translocate the tRNAs correctly. Binds to ribosomes in a GTP-dependent manner. The chain is Elongation factor 4 from Rhizobium johnstonii (strain DSM 114642 / LMG 32736 / 3841) (Rhizobium leguminosarum bv. viciae).